A 482-amino-acid chain; its full sequence is Solute carrier family 49 member A3 (482 aa).

Transmembrane regions (helical) follow at residues 41-61 (WFVL…WISF), 81-101 (YLSL…SWLI), 109-129 (AIVF…GAIV), 150-170 (LCAI…SVWF), 181-201 (IASM…PSVV), 206-226 (YIAH…ILAT), 264-284 (VILM…SSFL), 296-316 (LFAG…AFVC), 330-350 (VKTC…VINF), 355-375 (VLVA…SPVG), 390-410 (SSTG…MILF), and 437-457 (TSML…IIFF).

Belongs to the major facilitator superfamily.

The protein resides in the membrane. This chain is Solute carrier family 49 member A3 (slc49a3), found in Xenopus tropicalis (Western clawed frog).